A 474-amino-acid polypeptide reads, in one-letter code: Glutamyl-tRNA(Gln) amidotransferase subunit A (474 aa).

Active-site charge relay system residues include Lys76 and Ser151. Ser175 functions as the Acyl-ester intermediate in the catalytic mechanism.

This sequence belongs to the amidase family. GatA subfamily. As to quaternary structure, heterotrimer of A, B and C subunits.

The enzyme catalyses L-glutamyl-tRNA(Gln) + L-glutamine + ATP + H2O = L-glutaminyl-tRNA(Gln) + L-glutamate + ADP + phosphate + H(+). Allows the formation of correctly charged Gln-tRNA(Gln) through the transamidation of misacylated Glu-tRNA(Gln) in organisms which lack glutaminyl-tRNA synthetase. The reaction takes place in the presence of glutamine and ATP through an activated gamma-phospho-Glu-tRNA(Gln). This Chlorobium limicola (strain DSM 245 / NBRC 103803 / 6330) protein is Glutamyl-tRNA(Gln) amidotransferase subunit A.